The primary structure comprises 75 residues: MGRFLKTAVDALKVFILFTGFTALFYYAMIWVNQEYENYHRYDKPEGSAVKVVEMDQDEKGGWFDRLIFFYQNGE.

A helical transmembrane segment spans residues 12 to 32; the sequence is LKVFILFTGFTALFYYAMIWV.

It is found in the cell membrane. This is an uncharacterized protein from Bacillus subtilis (strain 168).